Reading from the N-terminus, the 364-residue chain is UDP-N-acetylglucosamine--N-acetylmuramyl-(pentapeptide) pyrophosphoryl-undecaprenol N-acetylglucosamine transferase 1 (364 aa).

UDP-N-acetyl-alpha-D-glucosamine-binding positions include 10 to 12, N124, S195, I250, and Q295; that span reads TGG.

The protein belongs to the glycosyltransferase 28 family. MurG subfamily.

Its subcellular location is the cell membrane. The enzyme catalyses di-trans,octa-cis-undecaprenyl diphospho-N-acetyl-alpha-D-muramoyl-L-alanyl-D-glutamyl-meso-2,6-diaminopimeloyl-D-alanyl-D-alanine + UDP-N-acetyl-alpha-D-glucosamine = di-trans,octa-cis-undecaprenyl diphospho-[N-acetyl-alpha-D-glucosaminyl-(1-&gt;4)]-N-acetyl-alpha-D-muramoyl-L-alanyl-D-glutamyl-meso-2,6-diaminopimeloyl-D-alanyl-D-alanine + UDP + H(+). Its pathway is cell wall biogenesis; peptidoglycan biosynthesis. In terms of biological role, cell wall formation. Catalyzes the transfer of a GlcNAc subunit on undecaprenyl-pyrophosphoryl-MurNAc-pentapeptide (lipid intermediate I) to form undecaprenyl-pyrophosphoryl-MurNAc-(pentapeptide)GlcNAc (lipid intermediate II). The polypeptide is UDP-N-acetylglucosamine--N-acetylmuramyl-(pentapeptide) pyrophosphoryl-undecaprenol N-acetylglucosamine transferase 1 (Bacillus thuringiensis subsp. konkukian (strain 97-27)).